The sequence spans 326 residues: Aquaporin-4 (326 aa).

Over Met-1 to Lys-39 the chain is Cytoplasmic. 2 S-palmitoyl cysteine lipidation sites follow: Cys-15 and Cys-20. A helical membrane pass occupies residues Ala-40–Ile-60. The Extracellular segment spans residues Asn-61–Asp-72. Residues Met-73–Gly-92 traverse the membrane as a helical segment. Topologically, residues His-93–Gly-96 are cytoplasmic. Residues Gly-97–Thr-104 constitute an intramembrane region (discontinuously helical). The NPA 1 signature appears at Asn-100–Ala-102. The Cytoplasmic portion of the chain corresponds to Val-105 to Ser-118. Ser-114 bears the Phosphoserine; by PKG mark. A helical membrane pass occupies residues Val-119 to Val-139. Topologically, residues Thr-140–Thr-158 are extracellular. An N-linked (GlcNAc...) asparagine glycan is attached at Asn-156. The helical transmembrane segment at Ala-159–Ala-179 threads the bilayer. The Cytoplasmic segment spans residues Ser-180–Asp-187. At Ser-183 the chain carries Phosphoserine; by PKC. A helical membrane pass occupies residues Val-188–Ile-208. An N-linked (GlcNAc...) asparagine glycan is attached at Asn-209. The Extracellular portion of the chain corresponds to Asn-209–Thr-211. The segment at residues Gly-212–Val-225 is an intramembrane region (discontinuously helical). The short motif at Asn-216–Ala-218 is the NPA 2 element. Over Ile-226–Trp-234 the chain is Extracellular. Residues Ile-235–Phe-255 form a helical membrane-spanning segment. The Cytoplasmic portion of the chain corresponds to Cys-256–Val-326. Phosphoserine occurs at positions 279 and 288. Thr-292 carries the post-translational modification Phosphothreonine. At Ser-324 the chain carries Phosphoserine.

Belongs to the MIP/aquaporin (TC 1.A.8) family. As to quaternary structure, homotetramer. The tetramers can form oligomeric arrays in membranes. The size of the oligomers differs between tissues and is smaller in skeletal muscle than in brain. Interaction between AQP4 oligomeric arrays in close-by cells can contribute to cell-cell adhesion. Part of a complex containing MLC1, TRPV4, HEPACAM and ATP1B1. In terms of processing, phosphorylation by PKC at Ser-183 reduces conductance by 50%. Phosphorylation by PKG at Ser-114 in response to glutamate increases conductance by 40%. Post-translationally, isoform Long: Palmitoylated on its N-terminal region.

It is found in the cell membrane. It localises to the basolateral cell membrane. Its subcellular location is the endosome membrane. The protein resides in the sarcolemma. The protein localises to the cell projection. The enzyme catalyses H2O(in) = H2O(out). Functionally, forms a water-specific channel. Plays an important role in brain water homeostasis and in glymphatic solute transport. Required for a normal rate of water exchange across the blood brain interface. Required for normal levels of cerebrospinal fluid influx into the brain cortex and parenchyma along paravascular spaces that surround penetrating arteries, and for normal drainage of interstitial fluid along paravenous drainage pathways. Thereby, it is required for normal clearance of solutes from the brain interstitial fluid, including soluble beta-amyloid peptides derived from APP. Plays a redundant role in urinary water homeostasis and urinary concentrating ability. This Notomys alexis (Spinifex hopping mouse) protein is Aquaporin-4 (AQP4).